The following is an 802-amino-acid chain: Ras GTPase-activating protein 4 (802 aa).

C2 domains are found at residues 1–105 and 116–232; these read MAKR…SGWT and VQGE…EGWF. 12 residues coordinate Ca(2+): Asp-21, Asp-27, Asp-74, Asp-76, Ser-79, Asp-82, Asp-149, Asp-155, Asp-202, Asp-204, Ser-207, and Asp-210. Positions 317–545 constitute a Ras-GAP domain; that stretch reads GLAKDFLDLL…AQLKDFIMKL (229 aa). Positions 565–672 constitute a PH domain; sequence PPVKEGPLFI…WLSALRKAST (108 aa). A Btk-type zinc finger spans residues 674 to 710; the sequence is NRGLLRSYHPGIFRGDKWSCCHQKDKTDQGCDKTHSR. Residues His-682, Cys-693, Cys-694, and Cys-704 each contribute to the Zn(2+) site.

It depends on Ca(2+) as a cofactor. As to expression, isoform 2 is expressed in osteoblasts.

The protein resides in the cytoplasm. The protein localises to the cytosol. It is found in the cell membrane. In terms of biological role, ca(2+)-dependent Ras GTPase-activating protein, that switches off the Ras-MAPK pathway following a stimulus that elevates intracellular calcium. Functions as an adaptor for Cdc42 and Rac1 during FcR-mediated phagocytosis. Isoform 2 activates the Ras pathway and promotes RANKL shedding by modulating the expression of MMP14. The sequence is that of Ras GTPase-activating protein 4 (Rasa4) from Mus musculus (Mouse).